The primary structure comprises 189 residues: MMQAESGSAEAKGPLPPPVGRKRRGLGILDFLLRLLAIGATLSAAITMGTTNETLQFFTQFFQFKARFYDLSAFIYFVIANAIVGGYLLLSLPISILNIVRPRAASSRVFLIFFDTVMVAVCTSGAAAAVAILYVARKGNSRTNWFAICQRFNSFCNQAIGAVSASFAGVVFLILLVLLSASTLYRRRP.

Residues 1 to 25 (MMQAESGSAEAKGPLPPPVGRKRRG) lie on the Cytoplasmic side of the membrane. The chain crosses the membrane as a helical span at residues 26–46 (LGILDFLLRLLAIGATLSAAI). Over 47–73 (TMGTTNETLQFFTQFFQFKARFYDLSA) the chain is Extracellular. N-linked (GlcNAc...) asparagine glycosylation occurs at Asn-52. A helical membrane pass occupies residues 74–94 (FIYFVIANAIVGGYLLLSLPI). Over 95-108 (SILNIVRPRAASSR) the chain is Cytoplasmic. A helical transmembrane segment spans residues 109-129 (VFLIFFDTVMVAVCTSGAAAA). The Extracellular portion of the chain corresponds to 130–158 (VAILYVARKGNSRTNWFAICQRFNSFCNQ). Residues 159 to 179 (AIGAVSASFAGVVFLILLVLL) traverse the membrane as a helical segment. Residues 180–189 (SASTLYRRRP) lie on the Cytoplasmic side of the membrane.

Belongs to the Casparian strip membrane proteins (CASP) family. In terms of assembly, homodimer and heterodimers.

The protein localises to the cell membrane. Its function is as follows. Regulates membrane-cell wall junctions and localized cell wall deposition. Required for establishment of the Casparian strip membrane domain (CSD) and the subsequent formation of Casparian strips, a cell wall modification of the root endodermis that determines an apoplastic barrier between the intraorganismal apoplasm and the extraorganismal apoplasm and prevents lateral diffusion. The sequence is that of Casparian strip membrane protein 1 from Picea glauca (White spruce).